The chain runs to 480 residues: Caspase-8 (480 aa).

A propeptide spanning residues 1–218 is cleaved from the precursor; sequence MDFQSCLYAI…ELCDSPREQD (218 aa). DED domains follow at residues 3–80 and 101–177; these read FQSC…NFLD and YRVM…KIED. 2 positions are modified to phosphoserine: S188 and S213. The residue at position 226 (K226) is an N6-acetyllysine. The active site involves H319. A Phosphotyrosine modification is found at Y336. C362 is an active-site residue. Residues 377 to 387 constitute a propeptide that is removed on maturation; the sequence is FEQQNHTLEVD. Phosphoserine; by CDK1 is present on S389.

Belongs to the peptidase C14A family. As to quaternary structure, heterotetramer that consists of two anti-parallel arranged heterodimers, each one formed by a 18 kDa (p18) and a 10 kDa (p10) subunit. Component of the death-induced signaling complex (DISC) composed of cell surface receptor FAS/CD95 or TNFRSF1A, adapter protein FADD and the CASP8 protease; recruitment of CASP8 to the complex is required for processing of CASP8 into the p18 and p10 subunits. Component of the AIM2 PANoptosome complex, a multiprotein complex that drives inflammatory cell death (PANoptosis). Interacts with CFLAR and PEA15. Interacts with RFFL and RNF34; negatively regulate CASP8 through proteasomal degradation. Interacts with TNFAIP8L2. Interacts with CASP8AP2. Interacts with NOL3; decreases CASP8 activity in a mitochondria localization- and phosphorylation-dependent manner and this interaction is dissociated by calcium. Interacts with UBR2. Interacts with RIPK1. Interacts with stimulated TNFRSF10B; this interaction is followed by CASP8 proteolytic cleavage and activation. In terms of processing, generation of the subunits requires association with the death-inducing signaling complex (DISC), whereas additional processing is likely due to the autocatalytic activity of the activated protease. GZMB and CASP10 can be involved in these processing events. (Microbial infection) Proteolytically cleaved by the cowpox virus CRMA death inhibitory protein. Post-translationally, phosphorylation on Ser-389 during mitosis by CDK1 inhibits activation by proteolysis and prevents apoptosis. This phosphorylation occurs in cancer cell lines, as well as in primary breast tissues and lymphocytes. Expressed in a wide variety of tissues. Highest expression in spleen, thymus, lung, liver and kidney. Lower expression in heart, brain, testis and skeletal muscle.

The protein resides in the cytoplasm. Its subcellular location is the nucleus. It carries out the reaction Strict requirement for Asp at position P1 and has a preferred cleavage sequence of (Leu/Asp/Val)-Glu-Thr-Asp-|-(Gly/Ser/Ala).. CASP8 activity is restricted by RIPK1. With respect to regulation, (Microbial infection) Inhibited by baculovirus p35 protein P35. Its function is as follows. Thiol protease that plays a key role in programmed cell death by acting as a molecular switch for apoptosis, necroptosis and pyroptosis, and is required to prevent tissue damage during embryonic development and adulthood. Initiator protease that induces extrinsic apoptosis by mediating cleavage and activation of effector caspases responsible for FAS/CD95-mediated and TNFRSF1A-induced cell death. Cleaves and activates effector caspases CASP3, CASP4, CASP6, CASP7, CASP9 and CASP10. Binding to the adapter molecule FADD recruits it to either receptor FAS/CD95 or TNFRSF1A. The resulting aggregate called the death-inducing signaling complex (DISC) performs CASP8 proteolytic activation. The active dimeric enzyme is then liberated from the DISC and free to activate downstream apoptotic proteases. Proteolytic fragments of the N-terminal propeptide (termed CAP3, CAP5 and CAP6) are likely retained in the DISC. In addition to extrinsic apoptosis, also acts as a negative regulator of necroptosis: acts by cleaving RIPK1 at 'Asp-325', which is crucial to inhibit RIPK1 kinase activity, limiting TNF-induced apoptosis, necroptosis and inflammatory response. Also able to initiate pyroptosis by mediating cleavage and activation of gasdermin-C and -D (GSDMC and GSDMD, respectively): gasdermin cleavage promotes release of the N-terminal moiety that binds to membranes and forms pores, triggering pyroptosis. Initiates pyroptosis following inactivation of MAP3K7/TAK1. Also acts as a regulator of innate immunity by mediating cleavage and inactivation of N4BP1 downstream of TLR3 or TLR4, thereby promoting cytokine production. May participate in the Granzyme B (GZMB) cell death pathways. Cleaves PARP1 and PARP2. The sequence is that of Caspase-8 from Mus musculus (Mouse).